A 251-amino-acid polypeptide reads, in one-letter code: Ubiquinone/menaquinone biosynthesis C-methyltransferase UbiE (251 aa).

S-adenosyl-L-methionine-binding positions include T74, D95, and 123–124 (NA).

Belongs to the class I-like SAM-binding methyltransferase superfamily. MenG/UbiE family.

The enzyme catalyses a 2-demethylmenaquinol + S-adenosyl-L-methionine = a menaquinol + S-adenosyl-L-homocysteine + H(+). It carries out the reaction a 2-methoxy-6-(all-trans-polyprenyl)benzene-1,4-diol + S-adenosyl-L-methionine = a 5-methoxy-2-methyl-3-(all-trans-polyprenyl)benzene-1,4-diol + S-adenosyl-L-homocysteine + H(+). The protein operates within quinol/quinone metabolism; menaquinone biosynthesis; menaquinol from 1,4-dihydroxy-2-naphthoate: step 2/2. Its pathway is cofactor biosynthesis; ubiquinone biosynthesis. In terms of biological role, methyltransferase required for the conversion of demethylmenaquinol (DMKH2) to menaquinol (MKH2) and the conversion of 2-polyprenyl-6-methoxy-1,4-benzoquinol (DDMQH2) to 2-polyprenyl-3-methyl-6-methoxy-1,4-benzoquinol (DMQH2). In Psychromonas ingrahamii (strain DSM 17664 / CCUG 51855 / 37), this protein is Ubiquinone/menaquinone biosynthesis C-methyltransferase UbiE.